The chain runs to 630 residues: MEVKGQLISSPTFNAPAALFGEAAPQVKSERLRGLLDRQRTLQEALSLKLQELRKVCLQEAELTGQLPPECPLEPGERPQLVRRRPPTARAYPPPHPNQAHHSLCPAEELALEALEREVSVQQQIAAAARRLALAPDLSTEQRRRRRQVQADALRRLHELEEQLRDVRARLGLPVLPLPQPLPLSTGSVITTQGVCLGMRLAQLSQEDVVLHSESSSLSESGASHDNEEPHGCFSLAERPSPPKAWDQLRAVSGGSPERRTPWKPPPSDLYGDLKSRRNSVASPTSPTRSLPRSASSFEGRSVPATPVLTRGAGPQLCKPEGLHSRQWSGSQDSQMGFPRADPASDRASLFVARTRRSNSSEALLVDRAAGGGAGSPPAPLAPSASGPPVCKSSEVLYERPQPTPAFSSRTAGPPDPPRAARPSSAAPASRGAPRLPPVCGDFLLDYSLDRGLPRSGGGTGWGELPPAAEVPGPLSRRDGLLTMLPGPPPVYAADSNSPLLRTKDPHTRATRTKPCGLPPEAAEGPEVHPNPLLWMPPPTRIPSAGERSGHKNLALEGLRDWYIRNSGLAAGPQRRPVLPSVGPPHPPFLHARCYEVGQALYGAPSQAPLPHSRSFTAPPVSGRYGGCFY.

The tract at residues 31–70 is involved in CYTH2-binding; the sequence is RLRGLLDRQRTLQEALSLKLQELRKVCLQEAELTGQLPPE. The stretch at 109-173 forms a coiled coil; it reads ELALEALERE…LRDVRARLGL (65 aa). Low complexity-rich tracts occupy residues 212–222 and 282–297; these read HSESSSLSESG and ASPT…SASS. 2 disordered regions span residues 212–435 and 457–534; these read HSES…GAPR and GGGT…NPLL. Residues 326 to 335 are compositionally biased toward polar residues; that stretch reads RQWSGSQDSQ. A phosphoserine mark is found at S358 and S360. A compositionally biased stretch (low complexity) spans 421-434; sequence ARPSSAAPASRGAP. R435 is subject to Omega-N-methylarginine.

In terms of assembly, interacts with NIN and CEP170; leading to recruit them to centrosomes. Directly interacts with CYTH2; this interaction stabilizes CCDC120, possibly by preventing ubiquitination. Ubiquitinated; interaction with CYTH2 may prevent ubiquitination.

It is found in the cytoplasm. It localises to the cytoskeleton. Its subcellular location is the microtubule organizing center. The protein localises to the centrosome. The protein resides in the centriole. It is found in the cell projection. It localises to the neuron projection. Its subcellular location is the growth cone. The protein localises to the endosome. Centriolar protein required for centriole subdistal appendage assembly and microtubule anchoring in interphase cells. Together with CCDC68, cooperate with subdistal appendage components ODF2, NIN and CEP170 for hierarchical subdistal appendage assembly. Recruits NIN and CEP170 to centrosomes. Also required for neurite growth. Localizes CYTH2 to vesicles to allow its transport along neurites, and subsequent ARF6 activation and neurite growth. This Homo sapiens (Human) protein is Coiled-coil domain-containing protein 120 (CCDC120).